A 153-amino-acid polypeptide reads, in one-letter code: 6,7-dimethyl-8-ribityllumazine synthase (153 aa).

5-amino-6-(D-ribitylamino)uracil contacts are provided by residues phenylalanine 22, 56 to 58, and 80 to 82; these read AFE and TVI. 85 to 86 is a (2S)-2-hydroxy-3-oxobutyl phosphate binding site; it reads ST. The Proton donor role is filled by histidine 88. Phenylalanine 113 is a binding site for 5-amino-6-(D-ribitylamino)uracil. A (2S)-2-hydroxy-3-oxobutyl phosphate-binding site is contributed by arginine 127.

This sequence belongs to the DMRL synthase family. As to quaternary structure, forms an icosahedral capsid composed of 60 subunits, arranged as a dodecamer of pentamers.

It carries out the reaction (2S)-2-hydroxy-3-oxobutyl phosphate + 5-amino-6-(D-ribitylamino)uracil = 6,7-dimethyl-8-(1-D-ribityl)lumazine + phosphate + 2 H2O + H(+). It functions in the pathway cofactor biosynthesis; riboflavin biosynthesis; riboflavin from 2-hydroxy-3-oxobutyl phosphate and 5-amino-6-(D-ribitylamino)uracil: step 1/2. Catalyzes the formation of 6,7-dimethyl-8-ribityllumazine by condensation of 5-amino-6-(D-ribitylamino)uracil with 3,4-dihydroxy-2-butanone 4-phosphate. This is the penultimate step in the biosynthesis of riboflavin. The polypeptide is 6,7-dimethyl-8-ribityllumazine synthase (Actinobacillus pleuropneumoniae serotype 3 (strain JL03)).